The chain runs to 380 residues: Alpha-N-acetylneuraminate alpha-2,8-sialyltransferase ST8SIA3 (380 aa).

At 1–9 the chain is on the cytoplasmic side; the sequence is MRNCKMARV. A helical; Signal-anchor for type II membrane protein membrane pass occupies residues 10–33; it reads ASVLGLVMLSVALLNLSLISYVSL. Topologically, residues 34 to 380 are lumenal; it reads KKENIFATPK…LTKLTLSHCA (347 aa). N-linked (GlcNAc...) asparagine glycans are attached at residues Asn-93 and Asn-113. Intrachain disulfides connect Cys-162/Cys-313 and Cys-176/Cys-379. Residues Asn-167 and Asn-190 each contribute to the CMP-N-acetyl-beta-neuraminate site. An N-linked (GlcNAc...) asparagine glycan is attached at Asn-206. CMP-N-acetyl-beta-neuraminate is bound by residues Ser-300, Thr-301, Gly-302, Trp-322, Tyr-336, and His-337. Residue His-354 is the Proton donor/acceptor of the active site.

The protein belongs to the glycosyltransferase 29 family. In terms of assembly, homodimer. In terms of processing, autopolysialylated.

Its subcellular location is the golgi apparatus membrane. It carries out the reaction [N-acetyl-alpha-D-neuraminosyl-(2-&gt;8)](n) + CMP-N-acetyl-beta-neuraminate = [N-acetyl-alpha-D-neuraminosyl-(2-&gt;8)](n+1) + CMP + H(+). The catalysed reaction is alpha-Neu5Ac-(2-&gt;3)-beta-D-Gal-(1-&gt;4)-6S-D-GlcNAc + CMP-N-acetyl-beta-neuraminate = alpha-Neu5Ac-(2-&gt;8)-alpha-Neu5Ac-(2-&gt;3)-beta-D-Gal-(1-&gt;4)-6S-D-GlcNAc + CMP + H(+). The enzyme catalyses a ganglioside GM3 (d18:1(4E)) + CMP-N-acetyl-beta-neuraminate = a ganglioside GD3 (d18:1(4E)) + CMP + H(+). It catalyses the reaction a ganglioside GM3 + CMP-N-acetyl-beta-neuraminate = a ganglioside GD3 + CMP + H(+). It carries out the reaction an N-acetyl-alpha-neuraminyl-(2-&gt;3)-beta-D-galactosyl derivative + CMP-N-acetyl-beta-neuraminate = an N-acetyl-alpha-neuraminyl-(2-&gt;8)-N-acetyl-alpha-neuraminyl-(2-&gt;3)-beta-D-galactosyl derivative + CMP + H(+). The catalysed reaction is an N-acetyl-alpha-neuraminyl-(2-&gt;3)-beta-D-galactosyl-(1-&gt;4)-N-acetyl-beta-D-glucosaminyl derivative + CMP-N-acetyl-beta-neuraminate = an alpha-Neu5Ac-(2-&gt;8)-alpha-Neu5Ac-(2-&gt;3)-beta-D-Gal-(1-&gt;4)-beta-D-GlcNAc derivative + CMP + H(+). It participates in protein modification; protein glycosylation. Catalyzes the transfer of sialic acid from a CMP-linked sialic acid donor onto a terminal alpha-2,3-, alpha-2,6-, or alpha-2,8-linked sialic acid of an acceptor, such as N-linked oligosaccharides of glycoproteins and glycolipids through alpha-2,8-linkages. Forms oligosialic and polysialic acid on various sialylated N-acetyllactosamine oligosaccharides of glycoproteins, including FETUB N-glycans, a2-HS-glycoprotein (AHSG) and alpha 2,3-sialylated glycosphingolipids, such as alpha 2,3-sialylparagloboside and ganglioside GM3 and to a lesser extent NCAM1 N-glycans. However, it is much more specific to N-linked oligosaccharides of glycoproteins than glycosphingolipids. 2,3-sialylparagloboside serves as the best acceptor substrate among the glycolipids. alpha-Neu5Ac-(2-&gt;8)-alpha-Neu5Ac-(2-&gt;3)-beta-D-Gal-(1-&gt;4)-6S-D-GlcNAc and monosialyl and disialyl N-acetyllactosamines are the best acceptor substrates among glycoproteins. May plays critical role in the striatum by mediating the formation of disialylated and trisialylated terminal glycotopes on N- and O-glycans of specific striatal proteins, regulating their distribution in lipid rafts, affecting their interaction with other binding partners, and subsequently modulating striatal functions. The sequence is that of Alpha-N-acetylneuraminate alpha-2,8-sialyltransferase ST8SIA3 from Pan troglodytes (Chimpanzee).